Here is a 515-residue protein sequence, read N- to C-terminus: SWI/SNF-related matrix-associated actin-dependent regulator of chromatin subfamily D member 1 (515 aa).

Residues 1-128 (MAARAGFQSV…RNHNAKKKKM (128 aa)) are disordered. Gly residues predominate over residues 14–23 (GGAGASGGAG). Residues 43–167 (APGQGLYRSP…DQTIMRKRLD (125 aa)) are interaction with ESR1, NR1H4, NR3C1, PGR and SMARCA4. Residues Arg-68 and Arg-88 each carry the asymmetric dimethylarginine modification. Lys-101 is covalently cross-linked (Glycyl lysine isopeptide (Lys-Gly) (interchain with G-Cter in SUMO2)). Over residues 104–117 (APQQIQQVQQQAVQ) the composition is skewed to low complexity. The segment at 168 to 474 (IQEALKRPIK…TMTDVVGNPE (307 aa)) is interaction with SMARCC1 and SMARCC2. The tract at residues 180-515 (RKLRIFISNT…LEQALGIRNT (336 aa)) is necessary for GR/NR3C1-mediated remodeling and transcription from chromatin; required for GR/NR3C1 interaction with the BRG1/SMARCA4 complex in vivo. Thr-203 carries the phosphothreonine modification. Lys-223 carries the post-translational modification N6-acetyllysine. The SWIB/MDM2 domain maps to 290–367 (YQPPQFKLDP…PQRLHALLMP (78 aa)). A coiled-coil region spans residues 412-440 (ASQQEIATLDNKIHETIETINQLKTQREF).

The protein belongs to the SMARCD family. As to quaternary structure, component of the multiprotein chromatin-remodeling complexes SWI/SNF: SWI/SNF-A (BAF), SWI/SNF-B (PBAF) and related complexes. The canonical complex contains a catalytic subunit (either SMARCA4/BRG1/BAF190A or SMARCA2/BRM/BAF190B), and at least SMARCE1, ACTL6A/BAF53, SMARCC1/BAF155, SMARCC2/BAF170, and SMARCB1/SNF5/BAF47. Other subunits specific to each of the complexes may also be present permitting several possible combinations developmentally and tissue specific. Component of the BAF complex, which includes at least actin (ACTB), ARID1A/BAF250A, ARID1B/BAF250B, SMARCA2/BRM, SMARCA4/BRG1/BAF190A, ACTL6A/BAF53, ACTL6B/BAF53B, SMARCE1/BAF57, SMARCC1/BAF155, SMARCC2/BAF170, SMARCB1/SNF5/INI1, and one or more SMARCD1/BAF60A, SMARCD2/BAF60B, or SMARCD3/BAF60C. In muscle cells, the BAF complex also contains DPF3. Component of neural progenitors-specific chromatin remodeling complex (npBAF complex) composed of at least, ARID1A/BAF250A or ARID1B/BAF250B, SMARCD1/BAF60A, SMARCD3/BAF60C, SMARCA2/BRM/BAF190B, SMARCA4/BRG1/BAF190A, SMARCB1/BAF47, SMARCC1/BAF155, SMARCE1/BAF57, SMARCC2/BAF170, PHF10/BAF45A, ACTL6A/BAF53A and actin. Component of neuron-specific chromatin remodeling complex (nBAF complex) composed of at least, ARID1A/BAF250A or ARID1B/BAF250B, SMARCD1/BAF60A, SMARCD3/BAF60C, SMARCA2/BRM/BAF190B, SMARCA4/BRG1/BAF190A, SMARCB1/BAF47, SMARCC1/BAF155, SMARCE1/BAF57, SMARCC2/BAF170, DPF1/BAF45B, DPF3/BAF45C, ACTL6B/BAF53B and actin. Component of the SWI/SNF-B (PBAF) chromatin remodeling complex, at least composed of SMARCA4/BRG1, SMARCB1/BAF47/SNF5, ACTL6A/BAF53A or ACTL6B/BAF53B, SMARCE1/BAF57, SMARCD1/BAF60A, SMARCD2/BAF60B, perhaps SMARCD3/BAF60C, SMARCC1/BAF155, SMARCC2/BAF170, PBRM1/BAF180, ARID2/BAF200 and actin (ACTB). Component of SWI/SNF (GBAF) subcomplex, which includes at least BICRA or BICRAL (mutually exclusive), BRD9, SS18, SMARCA2/BRM, SMARCA4/BRG1/BAF190A, ACTL6A/BAF53, SMARCC1/BAF155, and SMARCD1/BAF60A. Specifically interacts with the VDR heterodimer complex. Interacts with ESR1, NR3C1, NR1H4, PGR, SMARCA4, SMARCC1 and SMARCC2. Interacts with DPF2. Interacts with DPF3a (isoform 2 of DPF3/BAF45C) and with HDGFL2 in a DPF3a-dependent manner. Interacts with FOS, FOSB isoform 1 and 2, FOSL1 and FOSL2. Interacts with AKIRIN2. As to expression, ubiquitous.

It localises to the nucleus. Functionally, involved in transcriptional activation and repression of select genes by chromatin remodeling (alteration of DNA-nucleosome topology). Component of SWI/SNF chromatin remodeling complexes that carry out key enzymatic activities, changing chromatin structure by altering DNA-histone contacts within a nucleosome in an ATP-dependent manner. Belongs to the neural progenitors-specific chromatin remodeling complex (npBAF complex) and the neuron-specific chromatin remodeling complex (nBAF complex). During neural development a switch from a stem/progenitor to a postmitotic chromatin remodeling mechanism occurs as neurons exit the cell cycle and become committed to their adult state. The transition from proliferating neural stem/progenitor cells to postmitotic neurons requires a switch in subunit composition of the npBAF and nBAF complexes. As neural progenitors exit mitosis and differentiate into neurons, npBAF complexes which contain ACTL6A/BAF53A and PHF10/BAF45A, are exchanged for homologous alternative ACTL6B/BAF53B and DPF1/BAF45B or DPF3/BAF45C subunits in neuron-specific complexes (nBAF). The npBAF complex is essential for the self-renewal/proliferative capacity of the multipotent neural stem cells. The nBAF complex along with CREST plays a role regulating the activity of genes essential for dendrite growth. Has a strong influence on vitamin D-mediated transcriptional activity from an enhancer vitamin D receptor element (VDRE). May be a link between mammalian SWI-SNF-like chromatin remodeling complexes and the vitamin D receptor (VDR) heterodimer. Mediates critical interactions between nuclear receptors and the BRG1/SMARCA4 chromatin-remodeling complex for transactivation. The sequence is that of SWI/SNF-related matrix-associated actin-dependent regulator of chromatin subfamily D member 1 (Smarcd1) from Mus musculus (Mouse).